Here is a 352-residue protein sequence, read N- to C-terminus: D-alanine--D-alanine ligase (352 aa).

In terms of domain architecture, ATP-grasp spans 133–342; the sequence is KTVFAAAGLP…FPKLVDRLIQ (210 aa). 169-224 lines the ATP pocket; it reads DETIGYPNFVKPANLGSSVGISKVRSRLELEAALDSAASFDRRIVVEAGVVAREVE. Mg(2+) is bound by residues Asp295, Glu309, and Asn311.

The protein belongs to the D-alanine--D-alanine ligase family. The cofactor is Mg(2+). Mn(2+) serves as cofactor.

Its subcellular location is the cytoplasm. It carries out the reaction 2 D-alanine + ATP = D-alanyl-D-alanine + ADP + phosphate + H(+). It functions in the pathway cell wall biogenesis; peptidoglycan biosynthesis. In terms of biological role, cell wall formation. This Acaryochloris marina (strain MBIC 11017) protein is D-alanine--D-alanine ligase.